The following is a 198-amino-acid chain: FMN-dependent NADH:quinone oxidoreductase (198 aa).

Met92–Leu95 is an FMN binding site.

This sequence belongs to the azoreductase type 1 family. In terms of assembly, homodimer. FMN is required as a cofactor.

It carries out the reaction 2 a quinone + NADH + H(+) = 2 a 1,4-benzosemiquinone + NAD(+). The enzyme catalyses N,N-dimethyl-1,4-phenylenediamine + anthranilate + 2 NAD(+) = 2-(4-dimethylaminophenyl)diazenylbenzoate + 2 NADH + 2 H(+). Functionally, quinone reductase that provides resistance to thiol-specific stress caused by electrophilic quinones. In terms of biological role, also exhibits azoreductase activity. Catalyzes the reductive cleavage of the azo bond in aromatic azo compounds to the corresponding amines. The protein is FMN-dependent NADH:quinone oxidoreductase of Clostridium beijerinckii (strain ATCC 51743 / NCIMB 8052) (Clostridium acetobutylicum).